The primary structure comprises 164 residues: Phosphopantetheine adenylyltransferase (164 aa).

Residue serine 9 participates in substrate binding. ATP contacts are provided by residues 9-10 and histidine 17; that span reads SF. 3 residues coordinate substrate: lysine 41, leucine 73, and lysine 87. Residues 88-90, glutamate 98, and 123-129 each bind ATP; these read GLR and YSYLSSS.

Belongs to the bacterial CoaD family. As to quaternary structure, homohexamer. Mg(2+) is required as a cofactor.

The protein resides in the cytoplasm. It carries out the reaction (R)-4'-phosphopantetheine + ATP + H(+) = 3'-dephospho-CoA + diphosphate. The protein operates within cofactor biosynthesis; coenzyme A biosynthesis; CoA from (R)-pantothenate: step 4/5. Functionally, reversibly transfers an adenylyl group from ATP to 4'-phosphopantetheine, yielding dephospho-CoA (dPCoA) and pyrophosphate. The polypeptide is Phosphopantetheine adenylyltransferase (Clostridium botulinum (strain 657 / Type Ba4)).